A 542-amino-acid chain; its full sequence is Formate--tetrahydrofolate ligase (542 aa).

53 to 60 is a binding site for ATP; the sequence is TPAGEGKT.

The protein belongs to the formate--tetrahydrofolate ligase family.

The enzyme catalyses (6S)-5,6,7,8-tetrahydrofolate + formate + ATP = (6R)-10-formyltetrahydrofolate + ADP + phosphate. It functions in the pathway one-carbon metabolism; tetrahydrofolate interconversion. The polypeptide is Formate--tetrahydrofolate ligase (Thermotoga petrophila (strain ATCC BAA-488 / DSM 13995 / JCM 10881 / RKU-1)).